A 717-amino-acid chain; its full sequence is Cleavage stimulation factor subunit 3 (717 aa).

Ser-2 bears the N-acetylserine mark. 9 HAT repeats span residues 45 to 77 (QPIDKARKTYERLVAQFPSSGRFWKLYIEAEIK), 79 to 110 (KNYDKVEKLFQRCLMKVLHIDLWKCYLSYVRE), 117 to 152 (SYKEKMAQAYDFALDKIGMEIMSYQIWVDYINFLKG), 163 to 196 (QRITAVRRVYQRGCVNPMINIEQLWRDYNKYEEG), 221 to 261 (KEYE…WEKS), 271 to 303 (LITKRVMFAYEQCLLVLGHHPDIWYEAAQYLEQ), 319 to 352 (LFSDEAANIYERAISTLLKKNMLLYFAYADYEES), 354 to 387 (MKYEKVHSIYNRLLAIEDIDPTLVYIQYMKFARR), and 458 to 494 (NEDNNTRVLFERVLTSGSLPPEKSGEIWARFLAFESN). Residues 684–705 (VKRPNEDSDEDEEKGAVVPPVH) form a disordered region. Position 691 is a phosphoserine (Ser-691).

In terms of assembly, homodimer. The CSTF complex is composed of CSTF1 (50 kDa subunit), CSTF2 (64 kDa subunit) and CSTF3 (77 kDa subunit). CSTF3 directly interacts with CSTF1 and CSTF2. Interacts with FIP1L1.

The protein resides in the nucleus. Its function is as follows. One of the multiple factors required for polyadenylation and 3'-end cleavage of mammalian pre-mRNAs. This chain is Cleavage stimulation factor subunit 3 (CSTF3), found in Pongo abelii (Sumatran orangutan).